Consider the following 309-residue polypeptide: HPr kinase/phosphorylase (309 aa).

Residues H138 and K159 contribute to the active site. G153 to S160 serves as a coordination point for ATP. A Mg(2+)-binding site is contributed by S160. D177 acts as the Proton acceptor; for phosphorylation activity. Proton donor; for dephosphorylation activity in catalysis. Positions L201–N210 are important for the catalytic mechanism of both phosphorylation and dephosphorylation. E202 lines the Mg(2+) pocket. R243 is an active-site residue. Residues P264–R269 are important for the catalytic mechanism of dephosphorylation.

It belongs to the HPrK/P family. As to quaternary structure, homohexamer. It depends on Mg(2+) as a cofactor.

The enzyme catalyses [HPr protein]-L-serine + ATP = [HPr protein]-O-phospho-L-serine + ADP + H(+). It catalyses the reaction [HPr protein]-O-phospho-L-serine + phosphate + H(+) = [HPr protein]-L-serine + diphosphate. Functionally, catalyzes the ATP- as well as the pyrophosphate-dependent phosphorylation of a specific serine residue in HPr, a phosphocarrier protein of the phosphoenolpyruvate-dependent sugar phosphotransferase system (PTS). HprK/P also catalyzes the pyrophosphate-producing, inorganic phosphate-dependent dephosphorylation (phosphorolysis) of seryl-phosphorylated HPr (P-Ser-HPr). The two antagonistic activities of HprK/P are regulated by several intracellular metabolites, which change their concentration in response to the absence or presence of rapidly metabolisable carbon sources (glucose, fructose, etc.) in the growth medium. Also phosphorylates/dephosphorylates the HPr-like catabolite repression protein crh on a specific serine residue. Therefore, by controlling the phosphorylation state of HPr and crh, HPrK/P is a sensor enzyme that plays a major role in the regulation of carbon metabolism and sugar transport: it mediates carbon catabolite repression (CCR), and regulates PTS-catalyzed carbohydrate uptake and inducer exclusion. This Bacillus cereus (strain G9842) protein is HPr kinase/phosphorylase.